A 272-amino-acid chain; its full sequence is RELT-like protein 1 (272 aa).

A signal peptide spans 1–23; it reads MALWGLPGSAVLAASVFVGGAVS. Topologically, residues 24–58 are extracellular; that stretch reads SPLVAADNTGSHTLHSRAETTPSSPTNNPGNGHPE. The disordered stretch occupies residues 33–52; that stretch reads GSHTLHSRAETTPSSPTNNP. The helical transmembrane segment at 59-79 threads the bilayer; sequence YIAYVLVPVFFVMGLLGVLIC. The Cytoplasmic portion of the chain corresponds to 80–272; sequence HLLKKKGYRC…PVKRERSDTE (193 aa). The stretch at 90–114 forms a coiled coil; that stretch reads TTEAEQEVEEEKVEKIELNDSINEN. A phosphoserine mark is found at Ser110 and Ser115. Disordered regions lie at residues 146 to 171 and 235 to 272; these read DIES…PGAT and EHKS…SDTE. Residues 156-166 are compositionally biased toward pro residues; the sequence is PGSPPVSPGPL. The segment covering 235-245 has biased composition (basic and acidic residues); that stretch reads EHKSNQKERRS. Phosphoserine is present on residues Ser245 and Ser248.

Belongs to the RELT family. Interacts with RELT, RELL2, OXSR1 and PLSCR1.

The protein localises to the cell membrane. Functionally, induces activation of MAPK14/p38 cascade, when overexpressed. Induces apoptosis, when overexpressed. The polypeptide is RELT-like protein 1 (Rell1) (Mus musculus (Mouse)).